Here is a 643-residue protein sequence, read N- to C-terminus: MEGRTTAGRATPAGFWLFSCCLASVLWSANALIPAGKSAGSSFLAATSSQSSEEAPREFPGHLSNSQIASETGSALKIEEIASSGSAPEVSGAAGASASKTSEKPIRPYHTGPSSRSSAYSASSGIPLCHTCSSFDAANGGCRLCVHGEVASDFLMPMMPIRNIDTHREETLSRLEANHRTHLNEKKNFYVLRGKGPFGSLGNLPGTPGLDAAIAFGLSSPDLPSASFAQIKNKDSSDSGDVAAVGEETDSAVADGSKTLDLDLKLAETSVPILQMKDSQYVGVIGIGTPPQFVQPIFDTGSTNLWVVGSKCTDDTCTKVTRFDPSASKTFRAANPPVHLDITFGTGRIEGSTGIDDFTVGPFLVKGQSFGLVESEGGHNMHGNIFKTINFEGIVGLAFPEMSSTGTVPIYDNIISQGTLKENEFAFYMAKGSQVSALFFGGVDPRFYEAPIHMFPVTREHYWETSLDAIYIGDKKFCCEEGTKNYVILDSGTSFNTMPSGELGKLLDMIPSKECNLDDPEFTSDFPTITYVIGGVKFPLTPEQYLVRSKKNECKPAYMQIDVPSQFGHAYILGSVAFMRHYYTVFRRSDGTRPSLVGIARAVHNDDNSAYLSNVLNEYPGAHIRKEDLMMERSMSAPSMREL.

An N-terminal signal peptide occupies residues 1–31 (MEGRTTAGRATPAGFWLFSCCLASVLWSANA). Low complexity predominate over residues 87-99 (APEVSGAAGASAS). Residues 87–116 (APEVSGAAGASASKTSEKPIRPYHTGPSSR) form a disordered region. In terms of domain architecture, Peptidase A1 spans 281–600 (YVGVIGIGTP…GTRPSLVGIA (320 aa)). Residues aspartate 299 and aspartate 490 contribute to the active site.

The protein belongs to the peptidase A1 family.

The protein resides in the endomembrane system. With respect to regulation, inhibited by 49c, a hydroxyethylamine scaffold-based compound. Its function is as follows. Required for the processing-mediated maturation of a subset of microneme proteins, such as MIC6, and rhoptry proteins, such as ROP1. By regulating microneme and rhoptry processing, plays an essential role in the lysis of the host cell membrane during egress and in rhoptry content discharge, which is required for invasion of host cells. This is Aspartic protease 3 from Toxoplasma gondii.